The following is a 1049-amino-acid chain: MEKRLGVKPNPASWILSGYYWQTSAKWLRTLYLFYTCFCFSVLWLSTDASESRCQQGKTQFGVGLRSGGENHLWLLEGTPSLQSCWAACCQDSACHVFWWLEGMCIQADCSRPQSCRAFRTHSSNSMLMFLKKFQTADDLGFLPEDDVPHLLGLGWNWASWRQSPPRAALRPAVSSSDQQSLIRKLQKRGSPSEVVTPIVTQHSKVNDSNELGGLTTSGSAEVHKAITISSPLTTDLTAELPGGPKNVSAQPEIPEGLATTPSTQQVKSSEKTQIAVPQPVAPSYSYGTPTPQASFQSTSAPYPVIKELVVSAGDSVQITLPKNEVQLNAYVLQEPPKGETYTYDWQLITHPRDYSGEMEGKHSQILKLSKLTPGLYEFKVIVEGQNAHGEGYVNVTVKPEPRKNRPPIAIVSPQFQEISLPTTSTVIDGSQSTDDDKIVQYHWEELKGPLREEKISEDTAILKLSKLVPGNYTFSLTVVDSDGATNSTTANLTVNKAVDYPPVANAGPNQVITLPQNSITLFGNQSTDDHGITSYEWSLSPSSKGKVVEMQGVRTPTLQLSAMQEGDYTYQLTVTDTIGQQATAQVTVIVQPENNKPPQADAGPDKELTLPVDSTTLDGSKSSDDQKIISYLWEKTQGPDGVQLENANSSIATVTGLQVGTYVFTLTVKDERNLQSQSSVNVIVKEEINKPPIAKITGNVVITLPTSTAELDGSKSSDDKGIVSYLWTRDEGSPAAGEVLNHSDHHPILFLSNLVEGTYTFHLKVTDAKGESDTDRTTVEVKPDPRKNNLVEIILDINVSQLTERLKGMFIRQIGVLLGVLDSDIIVQKIQPYTEQSTKMVFFVQNEPPHQIFKGHEVAAMLKSELRKQKADFLIFRALEINTVTCQLNCSDHGHCDSFTKRCICDPFWMENFIKVQLRDGESNCEWSVLYVIIATFVIVVALGILSWTVICCCKRQKGKPKRKSKYKILDATDQESLELKPTSRTGIKQKGLVLSSSLMHSESELDSDDAIFTWPDREKGKLLHGQNGSVPNGQTPLKARSPREEIL.

Residues 1–29 are Cytoplasmic-facing; that stretch reads MEKRLGVKPNPASWILSGYYWQTSAKWLR. A helical transmembrane segment spans residues 30–50; sequence TLYLFYTCFCFSVLWLSTDAS. The MANSC domain maps to 49-127; sequence ASESRCQQGK…AFRTHSSNSM (79 aa). Residues 51–932 lie on the Extracellular side of the membrane; the sequence is ESRCQQGKTQ…ESNCEWSVLY (882 aa). The interval 234 to 277 is disordered; that stretch reads TTDLTAELPGGPKNVSAQPEIPEGLATTPSTQQVKSSEKTQIAV. Asn247, Asn395, and Asn487 each carry an N-linked (GlcNAc...) asparagine glycan. 5 consecutive PKD domains span residues 310–401, 409–498, 504–594, 600–688, and 694–785; these read VVSA…VKPE, IAIV…VNKA, VANA…VQPE, QADA…VKEE, and IAKI…VKPD. A helical transmembrane segment spans residues 933 to 953; it reads VIIATFVIVVALGILSWTVIC. The Cytoplasmic portion of the chain corresponds to 954-1049; it reads CCKRQKGKPK…KARSPREEIL (96 aa). Thr974 carries the phosphothreonine modification. Residues Ser978, Ser1009, and Ser1031 each carry the phosphoserine modification. A disordered region spans residues 1022–1049; it reads GKLLHGQNGSVPNGQTPLKARSPREEIL. A compositionally biased stretch (polar residues) spans 1028–1037; that stretch reads QNGSVPNGQT. A Phosphothreonine modification is found at Thr1037.

Interacts with RTN4R. In terms of processing, N-glycosylated.

Its subcellular location is the cytoplasmic granule membrane. It is found in the golgi apparatus membrane. The protein localises to the golgi apparatus. It localises to the trans-Golgi network membrane. The protein resides in the cell membrane. In terms of biological role, possible role in axon guidance through interaction with RTN4R. The sequence is that of Dyslexia-associated protein KIAA0319-like protein from Pongo abelii (Sumatran orangutan).